A 172-amino-acid polypeptide reads, in one-letter code: UPF0254 protein Mlab_1743 (172 aa).

The protein belongs to the UPF0254 family.

The chain is UPF0254 protein Mlab_1743 from Methanocorpusculum labreanum (strain ATCC 43576 / DSM 4855 / Z).